We begin with the raw amino-acid sequence, 113 residues long: PTS system fructose-like EIIB component 3 (113 aa).

The PTS EIIB type-2 domain maps to Met-1 to Lys-100. Residue Cys-10 is the Phosphocysteine intermediate of the active site. A Phosphocysteine; by EIIA modification is found at Cys-10.

The protein resides in the cytoplasm. The enzyme catalyses D-fructose(out) + N(pros)-phospho-L-histidyl-[protein] = D-fructose 1-phosphate(in) + L-histidyl-[protein]. The phosphoenolpyruvate-dependent sugar phosphotransferase system (sugar PTS), a major carbohydrate active transport system, catalyzes the phosphorylation of incoming sugar substrates concomitantly with their translocation across the cell membrane. The protein is PTS system fructose-like EIIB component 3 (frwD) of Escherichia coli (strain K12).